We begin with the raw amino-acid sequence, 289 residues long: Glucosamine-6-phosphate deaminase 1 (289 aa).

N6-acetyllysine is present on Lys64. Asp72 serves as the catalytic Proton acceptor; for enolization step. Asp141 functions as the For ring-opening step in the catalytic mechanism. The active-site Proton acceptor; for ring-opening step is the His143. Catalysis depends on Glu148, which acts as the For ring-opening step. Thr161 carries the phosphothreonine modification.

The protein belongs to the glucosamine/galactosamine-6-phosphate isomerase family. In terms of assembly, homohexamer.

The protein resides in the cytoplasm. The enzyme catalyses alpha-D-glucosamine 6-phosphate + H2O = beta-D-fructose 6-phosphate + NH4(+). It participates in nucleotide-sugar biosynthesis; UDP-N-acetyl-alpha-D-glucosamine biosynthesis; alpha-D-glucosamine 6-phosphate from D-fructose 6-phosphate: step 1/1. Allosterically activated by N-acetylglucosamine-6-phosphate (GlcNAc6P). In terms of biological role, catalyzes the reversible conversion of alpha-D-glucosamine 6-phosphate (GlcN-6P) into beta-D-fructose 6-phosphate (Fru-6P) and ammonium ion, a regulatory reaction step in de novo uridine diphosphate-N-acetyl-alpha-D-glucosamine (UDP-GlcNAc) biosynthesis via hexosamine pathway. Deamination is coupled to aldo-keto isomerization mediating the metabolic flux from UDP-GlcNAc toward Fru-6P. At high ammonium level can drive amination and isomerization of Fru-6P toward hexosamines and UDP-GlcNAc synthesis. Has a role in fine tuning the metabolic fluctuations of cytosolic UDP-GlcNAc and their effects on hyaluronan synthesis that occur during tissue remodeling. Seems to trigger calcium oscillations in mammalian eggs. These oscillations serve as the essential trigger for egg activation and early development of the embryo. This is Glucosamine-6-phosphate deaminase 1 from Bos taurus (Bovine).